We begin with the raw amino-acid sequence, 44 residues long: Homeobox protein DLX-1 (44 aa).

Residues 19–44 form a disordered region; sequence RALSAGSPPVPPGWNRIPPLGRAQEE.

The protein belongs to the distal-less homeobox family. As to quaternary structure, interacts with SMAD4 (via homeobox DNA-binding domain). Interacts (via homeobox DNA-binding domain) with POU4F2; this interaction suppresses DLX1-mediated transcriptional activity in postnatal retina and enhances retinal ganglion cell (RGC) differentiation.

It is found in the nucleus. Plays a role as a transcriptional activator or repressor. Inhibits several cytokine signaling pathways, such as TGFB1, activin-A/INHBA and BMP4 by interfering with the transcriptional stimulatory activity of transcription factors, such as MSX2, FAST2, SMAD2 and SMAD3 during hematopoietic cell differentiation. Plays a role in terminal differentiation of interneurons, such as amacrine and bipolar cells in the developing retina. Likely to play a regulatory role in the development of the ventral forebrain. May play a role in craniofacial patterning and morphogenesis and may be involved in the early development of diencephalic subdivisions. The polypeptide is Homeobox protein DLX-1 (Dlx1) (Rattus norvegicus (Rat)).